The following is a 277-amino-acid chain: Leucine-rich repeat-containing protein 10 (277 aa).

7 LRR repeats span residues 53–74 (ELVK…LGQL), 76–97 (NLQI…VCTL), 99–120 (QLCI…LSLL), 122–143 (NLRT…VCEL), 145–167 (LLKT…RRLQ), 168–189 (ELRT…LLHM), and 191–212 (FLEV…AHLS).

It is found in the nucleus. Its function is as follows. May play important roles in cardiac development and/or cardiac function. This Homo sapiens (Human) protein is Leucine-rich repeat-containing protein 10 (LRRC10).